The chain runs to 250 residues: AA9 family lytic polysaccharide monooxygenase B (250 aa).

An N-terminal signal peptide occupies residues 1-21 (MTLSKITSIAGLLASASLVAG). The Cu(2+) site is built by H22 and H107. H22 is modified (methylhistidine). 2 cysteine pairs are disulfide-bonded: C77/C199 and C118/C122. Residue N159 is glycosylated (N-linked (GlcNAc...) asparagine). 2 residues coordinate O2: H185 and Q194. Y196 provides a ligand contact to Cu(2+).

This sequence belongs to the polysaccharide monooxygenase AA9 family. It depends on Cu(2+) as a cofactor. In terms of processing, the catalytically essential N-terminal histidine His-22 is post-translationally modified by methylation to prevent protonation of the histidine side chain, and protect the critical active site of the enzyme from oxidative damage.

It localises to the secreted. It catalyses the reaction [(1-&gt;4)-beta-D-glucosyl]n+m + reduced acceptor + O2 = 4-dehydro-beta-D-glucosyl-[(1-&gt;4)-beta-D-glucosyl]n-1 + [(1-&gt;4)-beta-D-glucosyl]m + acceptor + H2O.. Lytic polysaccharide monooxygenase (LPMO) that depolymerizes crystalline and amorphous polysaccharides via the oxidation of scissile alpha- or beta-(1-4)-glycosidic bonds, yielding C1 and C4 oxidation products. Catalysis by LPMOs requires the reduction of the active-site copper from Cu(II) to Cu(I) by a reducing agent and H(2)O(2) or O(2) as a cosubstrate. Shows activity on phosphoric acid swollen cellulose, on NaOH pretreated soy spent flakes as well as on crystalline cellulose (Avicel). Does not have a positive effect on cel6A activity, but acts synergistically with endoglucanase egl7. The polypeptide is AA9 family lytic polysaccharide monooxygenase B (Aspergillus fumigatus (strain ATCC MYA-4609 / CBS 101355 / FGSC A1100 / Af293) (Neosartorya fumigata)).